Reading from the N-terminus, the 367-residue chain is Cobalt-precorrin-5B C(1)-methyltransferase (367 aa).

It belongs to the CbiD family.

The catalysed reaction is Co-precorrin-5B + S-adenosyl-L-methionine = Co-precorrin-6A + S-adenosyl-L-homocysteine. The protein operates within cofactor biosynthesis; adenosylcobalamin biosynthesis; cob(II)yrinate a,c-diamide from sirohydrochlorin (anaerobic route): step 6/10. Its function is as follows. Catalyzes the methylation of C-1 in cobalt-precorrin-5B to form cobalt-precorrin-6A. The protein is Cobalt-precorrin-5B C(1)-methyltransferase of Leptospira interrogans serogroup Icterohaemorrhagiae serovar Lai (strain 56601).